Here is a 3795-residue protein sequence, read N- to C-terminus: NBPF family member NBPF10 (3795 aa).

Residues 75 to 119 (RQFKEEKLAEQLKQAEELRQYKVLVHSQERELTQLREKLREGRDA) adopt a coiled-coil conformation. Positions 161-200 (KLSPENDEDEDEDVQVEEAEKVLESSAPREVQKAEESKVP) are disordered. The segment covering 165–177 (ENDEDEDEDVQVE) has biased composition (acidic residues). Residues 165–259 (ENDEDEDEDV…ECQDALNILP (95 aa)) enclose the Olduvai 1 domain. Over residues 190–200 (EVQKAEESKVP) the composition is skewed to basic and acidic residues. Residues 346–390 (RQFKEEKLAEQLKQAEELRQYKVLVHAQERELTQLKEKLREGRDA) adopt a coiled-coil conformation. Olduvai domains are found at residues 436-528 (ENDN…HIIP), 529-600 (ENES…VDIG), 601-692 (RHRW…PSCP), 695-750 (SREL…LDVD), 751-843 (RIKK…RSKK), 844-936 (ERRR…PSCP), 939-994 (SREL…LDVD), 995-1087 (RIKK…RSKK), 1088-1180 (ERRR…PSCP), 1183-1238 (SREL…LDVD), 1239-1331 (RIKK…RSKK), 1332-1424 (ERRR…PSCP), 1427-1482 (SREL…LDVD), 1483-1575 (RIKK…RSKK), 1576-1668 (ERRR…PSCP), 1671-1726 (SREL…LDVD), 1727-1819 (RIKK…RSKK), 1820-1912 (ERRR…PSCP), 1915-1970 (SREL…LDVD), 1971-2063 (RIKK…RSKK), 2064-2156 (ERRR…PSCP), 2159-2214 (SREL…LDVD), 2215-2307 (RIKK…RSKK), 2308-2400 (ERRR…PSCP), 2403-2458 (SREL…LDVD), 2459-2551 (RIKK…RSKK), 2552-2644 (ERRR…PSCP), 2647-2702 (SREL…LDVD), 2703-2795 (RIKK…RSKK), 2796-2888 (ERRR…PSCP), 2891-2946 (SREL…LDVD), 2947-3039 (RIKK…RSKK), 3040-3132 (ERRR…PSCP), 3135-3190 (SREL…LDVD), 3191-3283 (RIKK…RSKK), 3284-3376 (ERRR…PSCP), 3379-3434 (SREL…LDVD), 3435-3527 (RIKK…RSKK), 3528-3620 (ERRR…PSCP), 3623-3696 (SREL…RSKK), and 3697-3795 (ERRR…IFPQ). 2 disordered regions span residues 451–475 (EKVQ…EDSL) and 520–566 (WEDA…EGYS). Composition is skewed to acidic residues over residues 530-539 (NESDDEEEEE) and 550-562 (ESEE…ESWD). The tract at residues 830–868 (KGKGKKRRGRRSKKERRRGRKEGEEDQNPPCPRLSRELL) is disordered. Over residues 831–849 (GKGKKRRGRRSKKERRRGR) the composition is skewed to basic residues. Residues 1073-1109 (KKGKGKKRRGRRSKKERRRGRKEGEEDQNPPCPRLSR) are disordered. Over residues 1075 to 1093 (GKGKKRRGRRSKKERRRGR) the composition is skewed to basic residues. Disordered regions lie at residues 1242-1261 (KDEE…SREL) and 1318-1353 (KGKG…RLSR). Over residues 1319–1337 (GKGKKRRGRRSKKERRRGR) the composition is skewed to basic residues. The interval 1562-1600 (KGKGKKRRGRRSKKERRRGRKEGEEDQNPPCPRLSRELL) is disordered. Positions 1563 to 1581 (GKGKKRRGRRSKKERRRGR) are enriched in basic residues. The interval 1806–1844 (KGKGKKRRGRRSKKERRRGRKEGEEDQNPPCPRLSRELL) is disordered. Over residues 1807-1825 (GKGKKRRGRRSKKERRRGR) the composition is skewed to basic residues. Residues 2050–2088 (KGKGKKRRGRRSKKERRRGRKEGEEDQNPPCPRLSRELL) are disordered. Over residues 2051–2069 (GKGKKRRGRRSKKERRRGR) the composition is skewed to basic residues. The disordered stretch occupies residues 2294 to 2332 (KGKGKKRRGRRSKKERRRGRKEGEEDQNPPCPRLSRELL). A compositionally biased stretch (basic residues) spans 2295–2313 (GKGKKRRGRRSKKERRRGR). The segment at 2538-2576 (KGKGKKRRGRRSKKERRRGRKEGEEDQNPPCPRLSRELL) is disordered. The segment covering 2539 to 2557 (GKGKKRRGRRSKKERRRGR) has biased composition (basic residues). Positions 2782-2820 (KGKGKKRRGRRSKKERRRGRKEGEEDQNPPCPRLSRELL) are disordered. Over residues 2783 to 2801 (GKGKKRRGRRSKKERRRGR) the composition is skewed to basic residues. The interval 3026–3064 (KGKGKKRRGRRSKKERRRGRKEGEEDQNPPCPRLSRELL) is disordered. Positions 3027 to 3045 (GKGKKRRGRRSKKERRRGR) are enriched in basic residues. Disordered stretches follow at residues 3194-3213 (KDEE…SREL) and 3270-3308 (KGKG…RELL). Residues 3271–3289 (GKGKKRRGRRSKKERRRGR) are compositionally biased toward basic residues. Disordered regions lie at residues 3514 to 3552 (KGKG…RELL) and 3684 to 3716 (GKGK…CPRL). Basic residues-rich tracts occupy residues 3515 to 3533 (GKGK…RRGR) and 3684 to 3702 (GKGK…RRGR).

The protein belongs to the NBPF family.

It localises to the cytoplasm. The sequence is that of NBPF family member NBPF10 from Homo sapiens (Human).